A 120-amino-acid chain; its full sequence is Large ribosomal subunit protein P3y (120 aa).

Positions 81-92 (GGAAAGGGGGGE) are enriched in gly residues. Residues 81–120 (GGAAAGGGGGGEAAAATKEEEKKKEESEEEEGDFGFDLFG) are disordered. The segment covering 97-106 (TKEEEKKKEE) has biased composition (basic and acidic residues).

This sequence belongs to the eukaryotic ribosomal protein P1/P2 family.

Plays an important role in the elongation step of protein synthesis. This is Large ribosomal subunit protein P3y (RPP3B) from Arabidopsis thaliana (Mouse-ear cress).